We begin with the raw amino-acid sequence, 436 residues long: UDP-N-acetylmuramate--L-alanine ligase (436 aa).

Residue 110–116 coordinates ATP; that stretch reads GAHGKTS.

Belongs to the MurCDEF family.

It is found in the cytoplasm. The enzyme catalyses UDP-N-acetyl-alpha-D-muramate + L-alanine + ATP = UDP-N-acetyl-alpha-D-muramoyl-L-alanine + ADP + phosphate + H(+). Its pathway is cell wall biogenesis; peptidoglycan biosynthesis. Functionally, cell wall formation. This Lacticaseibacillus casei (strain BL23) (Lactobacillus casei) protein is UDP-N-acetylmuramate--L-alanine ligase.